We begin with the raw amino-acid sequence, 875 residues long: Phosphoenolpyruvate carboxylase (875 aa).

Residues His-137 and Lys-542 contribute to the active site.

This sequence belongs to the PEPCase type 1 family. It depends on Mg(2+) as a cofactor.

The enzyme catalyses oxaloacetate + phosphate = phosphoenolpyruvate + hydrogencarbonate. In terms of biological role, forms oxaloacetate, a four-carbon dicarboxylic acid source for the tricarboxylic acid cycle. The protein is Phosphoenolpyruvate carboxylase of Pseudomonas putida (strain ATCC 700007 / DSM 6899 / JCM 31910 / BCRC 17059 / LMG 24140 / F1).